Consider the following 819-residue polypeptide: MRYDPGLIEEKWQKFWKNEQVFKAEEDETKTKYYVLDMFPYPSGAGLHVGHLIGYTATDIVARCKRAQGFSVLHPMGWDSFGLPAEQYAIRTGTHPRETTEKNIANFKKQLTAMGFSYDESREFATSDPEYYKWTQKLFLILYEKGLAYMADMAVNYCPELGTVLSNEEIENGFSVDGGYPVERRMLRQWVLRITAFADQLLEGLDELDWPESVKQLQKNWIGKSSGASVNFATEHGAIEVFTTRPDTLIGVSFLALAPEHPLVDLLTSDEQKAVVAQYIKETQSKSERDRISEMKTKSGVFTGSYAKHPVTHELIPIWIADYVLMGFGSGAVMGVPAHDERDLLFAEQFNLPVVSVLNEEGVCINSCCEGFHLDGLSGEEAKQYVINFLEENHLGAAKIAYKLRDWLFSRQRYWGEPIPIIHFEDGSCRPLRDDELPLLPPEIQDYRPEGVGQGPLAKVREWVQVFDTETQRAGKRETHTMPQWAGSCWYYLRFCDAHNSAAPWAKEKEQYWMPVDLYIGGAEHAVLHLLYARFWHQVFYEAGIVSTPEPFKKLVNQGLVLATSYRIPGKGYIYPETAKEENGKWVAPSGEELDVRQEKMSKSKLNGVDPQILIDEFGADAVRMYAMFSGPLDKNKLWSNQGVAGCRRFLNRFYEMVSSDRVKEDNNFEGLSLAHKLVQRVTDAIEKLSLNTIPSSFMEFINDFVKLAVYPKSAVEMAVRALAPIAPHISEELWVLLGNSPGVQKSGWPSVLPEYLEEQTVTIVVQVNGKLRARLDIMKDASKEEVLALARESASKYLEGCEVKKAIFVPARLVNFVV.

The 'HIGH' region motif lies at 40–51 (PYPSGAGLHVGH). A 'KMSKS' region motif is present at residues 600–604 (KMSKS). Lysine 603 provides a ligand contact to ATP.

Belongs to the class-I aminoacyl-tRNA synthetase family.

It localises to the cytoplasm. The catalysed reaction is tRNA(Leu) + L-leucine + ATP = L-leucyl-tRNA(Leu) + AMP + diphosphate. The sequence is that of Leucine--tRNA ligase from Chlamydia trachomatis serovar L2 (strain ATCC VR-902B / DSM 19102 / 434/Bu).